The sequence spans 207 residues: Negative modulator of initiation of replication (207 aa).

Positions 43–54 are enriched in polar residues; that stretch reads ATPITSSVTPSA. Residues 43 to 63 are disordered; it reads ATPITSSVTPSAPRQEAVNDE.

The protein belongs to the SeqA family. Homodimer. Polymerizes to form helical filaments.

It localises to the cytoplasm. Functionally, negative regulator of replication initiation, which contributes to regulation of DNA replication and ensures that replication initiation occurs exactly once per chromosome per cell cycle. Binds to pairs of hemimethylated GATC sequences in the oriC region, thus preventing assembly of replication proteins and re-initiation at newly replicated origins. Repression is relieved when the region becomes fully methylated. The protein is Negative modulator of initiation of replication of Psychromonas ingrahamii (strain DSM 17664 / CCUG 51855 / 37).